Reading from the N-terminus, the 307-residue chain is MTTSEPYERAFDEDIQRGTTEPCPECGGPVRTNSAETVCADCGLIIDEQSIDRGPEWHRDDADTAKRTGAPLTPARHDRGLSTVIGSGQDARGTALSSEKRRRLARMRREQSRGRWRSTKERNLGHGLTEIRRIASALGLADSVRDQACQLFRTAQNERLLKGRSIEAMAAASVFGACRCNGESWLIDDVAPMAQVGQNRVENAYTVLNEELGLPTPPVSLDQFVPRLASDLGCTDVVRRRAEELVVQAVDAGITTGVHPSGFAAACLYMAACVHDAPLTQADAAAAAGVTVETIRSHRDRLLSIVE.

The TFIIB-type zinc finger occupies 19–47 (TTEPCPECGGPVRTNSAETVCADCGLIID). Zn(2+) contacts are provided by cysteine 23, cysteine 26, cysteine 39, and cysteine 42. Composition is skewed to basic and acidic residues over residues 54 to 66 (GPEW…DTAK) and 107 to 121 (MRRE…STKE). A disordered region spans residues 54–121 (GPEWHRDDAD…SRGRWRSTKE (68 aa)). 2 consecutive repeat copies span residues 129-212 (TEIR…NEEL) and 223-304 (QFVP…RLLS).

This sequence belongs to the TFIIB family.

Functionally, stabilizes TBP binding to an archaeal box-A promoter. Also responsible for recruiting RNA polymerase II to the pre-initiation complex (DNA-TBP-TFIIB). The polypeptide is Transcription initiation factor IIB 5 (Halobacterium salinarum (strain ATCC 700922 / JCM 11081 / NRC-1) (Halobacterium halobium)).